Here is a 248-residue protein sequence, read N- to C-terminus: Ribosomal RNA small subunit methyltransferase J (248 aa).

S-adenosyl-L-methionine contacts are provided by residues Arg-98 to Asp-99, Glu-114 to Arg-115, Ser-150 to Ser-151, and Asp-168.

Belongs to the methyltransferase superfamily. RsmJ family.

It is found in the cytoplasm. The catalysed reaction is guanosine(1516) in 16S rRNA + S-adenosyl-L-methionine = N(2)-methylguanosine(1516) in 16S rRNA + S-adenosyl-L-homocysteine + H(+). In terms of biological role, specifically methylates the guanosine in position 1516 of 16S rRNA. This Shewanella baltica (strain OS185) protein is Ribosomal RNA small subunit methyltransferase J.